A 262-amino-acid polypeptide reads, in one-letter code: Acyl-[acyl-carrier-protein]--UDP-N-acetylglucosamine O-acyltransferase (262 aa).

Belongs to the transferase hexapeptide repeat family. LpxA subfamily. Homotrimer.

It is found in the cytoplasm. It carries out the reaction a (3R)-hydroxyacyl-[ACP] + UDP-N-acetyl-alpha-D-glucosamine = a UDP-3-O-[(3R)-3-hydroxyacyl]-N-acetyl-alpha-D-glucosamine + holo-[ACP]. The protein operates within glycolipid biosynthesis; lipid IV(A) biosynthesis; lipid IV(A) from (3R)-3-hydroxytetradecanoyl-[acyl-carrier-protein] and UDP-N-acetyl-alpha-D-glucosamine: step 1/6. In terms of biological role, involved in the biosynthesis of lipid A, a phosphorylated glycolipid that anchors the lipopolysaccharide to the outer membrane of the cell. This is Acyl-[acyl-carrier-protein]--UDP-N-acetylglucosamine O-acyltransferase from Paracidovorax citrulli (strain AAC00-1) (Acidovorax citrulli).